A 316-amino-acid polypeptide reads, in one-letter code: Large ribosomal subunit protein uL4 (316 aa).

Positions 1–211 (MASCVVKNWQ…EQLKARWGSD (211 aa)) are large ribosomal subunit protein uL4. Disordered stretches follow at residues 44 to 76 (ARQGNAHTKTRAEVRGGGRKPWKQKGTGRARAG) and 231 to 316 (EDQA…ESDD). Basic residues predominate over residues 60–71 (GGRKPWKQKGTG). A unknown region spans residues 212–316 (AAPAVLETPS…TAPAEEESDD (105 aa)). Residues 255–270 (QTPAQPEAQENQAALQ) show a composition bias toward low complexity. Composition is skewed to acidic residues over residues 281–291 (EQTEEPQDPAE) and 301–316 (TVEEAETAPAEEESDD).

Belongs to the universal ribosomal protein uL4 family. As to quaternary structure, part of the 50S ribosomal subunit.

In terms of biological role, one of the primary rRNA binding proteins, this protein initially binds near the 5'-end of the 23S rRNA. It is important during the early stages of 50S assembly. It makes multiple contacts with different domains of the 23S rRNA in the assembled 50S subunit and ribosome. Its function is as follows. Forms part of the polypeptide exit tunnel. In Synechococcus sp. (strain JA-2-3B'a(2-13)) (Cyanobacteria bacterium Yellowstone B-Prime), this protein is Large ribosomal subunit protein uL4.